Reading from the N-terminus, the 114-residue chain is Probable 4-amino-4-deoxy-L-arabinose-phosphoundecaprenol flippase subunit ArnE (114 aa).

3 helical membrane passes run 38–58 (LTLRWLAIAVVSLGLGMLLWL), 64–84 (LPLSVAYPMLSFNFVLVTLAA), and 94–114 (LRHWLGVAAIMFGILLMSWHL). The region spanning 43–112 (LAIAVVSLGL…IMFGILLMSW (70 aa)) is the EamA domain.

The protein belongs to the ArnE family. In terms of assembly, heterodimer of ArnE and ArnF.

Its subcellular location is the cell inner membrane. It participates in bacterial outer membrane biogenesis; lipopolysaccharide biosynthesis. Translocates 4-amino-4-deoxy-L-arabinose-phosphoundecaprenol (alpha-L-Ara4N-phosphoundecaprenol) from the cytoplasmic to the periplasmic side of the inner membrane. The chain is Probable 4-amino-4-deoxy-L-arabinose-phosphoundecaprenol flippase subunit ArnE from Yersinia pestis bv. Antiqua (strain Antiqua).